The sequence spans 430 residues: Glutamate-1-semialdehyde 2,1-aminomutase (430 aa).

Residue Lys-265 is modified to N6-(pyridoxal phosphate)lysine.

The protein belongs to the class-III pyridoxal-phosphate-dependent aminotransferase family. HemL subfamily. Homodimer. Pyridoxal 5'-phosphate serves as cofactor.

Its subcellular location is the cytoplasm. It catalyses the reaction (S)-4-amino-5-oxopentanoate = 5-aminolevulinate. It participates in porphyrin-containing compound metabolism; protoporphyrin-IX biosynthesis; 5-aminolevulinate from L-glutamyl-tRNA(Glu): step 2/2. The protein is Glutamate-1-semialdehyde 2,1-aminomutase (hemL) of Helicobacter pylori (strain ATCC 700392 / 26695) (Campylobacter pylori).